Reading from the N-terminus, the 410-residue chain is Phosphoglycerate kinase (410 aa).

Substrate-binding positions include 24–26 (DLN), Arg-40, 63–66 (HLGR), Arg-122, and Arg-162. Residues Lys-212, Gly-300, Glu-331, and 360–363 (GGDS) each bind ATP.

Belongs to the phosphoglycerate kinase family. Monomer.

It localises to the cytoplasm. The catalysed reaction is (2R)-3-phosphoglycerate + ATP = (2R)-3-phospho-glyceroyl phosphate + ADP. The protein operates within carbohydrate degradation; glycolysis; pyruvate from D-glyceraldehyde 3-phosphate: step 2/5. The protein is Phosphoglycerate kinase of Nocardia farcinica (strain IFM 10152).